The chain runs to 215 residues: Reticulon-like protein B14 (215 aa).

The Reticulon domain occupies 31–211; it reads FADIMFWKNK…NKIPKAQAKT (181 aa). The next 3 helical transmembrane spans lie at 41–61, 62–82, and 141–161; these read KESGTILGVFTLIWFLFEVVE, YPFITFLCQILLLFIFIFLIW, and LWILSVVGNYFSSLTLLYIVF.

It is found in the endoplasmic reticulum membrane. In Arabidopsis thaliana (Mouse-ear cress), this protein is Reticulon-like protein B14 (RTNLB14).